Here is a 131-residue protein sequence, read N- to C-terminus: Fluoride-specific ion channel FluC (131 aa).

Transmembrane regions (helical) follow at residues 10 to 30 (AAVAIGGALGAVCRYLLSGLV), 36 to 56 (FPMGTVLVNVLGSFVLGFLTW), 71 to 91 (LATVGFCGGLTTLSTMAYETV), and 99 to 119 (VLSILYLTANVVLGIAAVLGG). Na(+) is bound by residues glycine 78 and threonine 81.

Belongs to the fluoride channel Fluc/FEX (TC 1.A.43) family.

Its subcellular location is the cell membrane. It carries out the reaction fluoride(in) = fluoride(out). Na(+) is not transported, but it plays an essential structural role and its presence is essential for fluoride channel function. In terms of biological role, fluoride-specific ion channel. Important for reducing fluoride concentration in the cell, thus reducing its toxicity. The polypeptide is Fluoride-specific ion channel FluC (Methanopyrus kandleri (strain AV19 / DSM 6324 / JCM 9639 / NBRC 100938)).